A 118-amino-acid polypeptide reads, in one-letter code: Small ribosomal subunit protein uS13 (118 aa).

A disordered region spans residues 94-118 (GLPVHGQRTKTNARTRKGPAKSITR).

The protein belongs to the universal ribosomal protein uS13 family. As to quaternary structure, part of the 30S ribosomal subunit. Forms a loose heterodimer with protein S19. Forms two bridges to the 50S subunit in the 70S ribosome.

Functionally, located at the top of the head of the 30S subunit, it contacts several helices of the 16S rRNA. In the 70S ribosome it contacts the 23S rRNA (bridge B1a) and protein L5 of the 50S subunit (bridge B1b), connecting the 2 subunits; these bridges are implicated in subunit movement. Contacts the tRNAs in the A and P-sites. This Acidithiobacillus ferrooxidans (strain ATCC 23270 / DSM 14882 / CIP 104768 / NCIMB 8455) (Ferrobacillus ferrooxidans (strain ATCC 23270)) protein is Small ribosomal subunit protein uS13.